Consider the following 734-residue polypeptide: Transcriptional regulator AacuB (734 aa).

Positions 26–52 form a DNA-binding region, zn(2)-C6 fungal-type; sequence CVLCQQRKIKCDRTFPCTNCVRAHVQC. Residues 86-107 are compositionally biased toward basic and acidic residues; the sequence is FDPLHTPTADHRSASDDGRDDL. Residues 86 to 122 are disordered; that stretch reads FDPLHTPTADHRSASDDGRDDLPEGAESEGTFGEREK.

The protein resides in the nucleus. Functionally, transcriptional regulator; part of the gene cluster that mediates the biosynthesis of the tetrahydroxanthone dimer secalonic acid D. This chain is Transcriptional regulator AacuB, found in Aspergillus aculeatus (strain ATCC 16872 / CBS 172.66 / WB 5094).